The primary structure comprises 292 residues: Phosphatidylglycerol--prolipoprotein diacylglyceryl transferase (292 aa).

Transmembrane regions (helical) follow at residues 18-38 (LFGV…GLLI), 67-87 (LLTW…VLFY), and 105-125 (GGMS…AFCL). A 1,2-diacyl-sn-glycero-3-phospho-(1'-sn-glycerol) is bound at residue Arg150. Helical transmembrane passes span 193-213 (QIYE…LLVW), 222-242 (GSVS…VEFV), and 266-286 (GLTM…YLIL).

It belongs to the Lgt family.

Its subcellular location is the cell inner membrane. It carries out the reaction L-cysteinyl-[prolipoprotein] + a 1,2-diacyl-sn-glycero-3-phospho-(1'-sn-glycerol) = an S-1,2-diacyl-sn-glyceryl-L-cysteinyl-[prolipoprotein] + sn-glycerol 1-phosphate + H(+). Its pathway is protein modification; lipoprotein biosynthesis (diacylglyceryl transfer). Functionally, catalyzes the transfer of the diacylglyceryl group from phosphatidylglycerol to the sulfhydryl group of the N-terminal cysteine of a prolipoprotein, the first step in the formation of mature lipoproteins. This chain is Phosphatidylglycerol--prolipoprotein diacylglyceryl transferase, found in Cereibacter sphaeroides (strain ATCC 17029 / ATH 2.4.9) (Rhodobacter sphaeroides).